The following is a 296-amino-acid chain: Myeloid differentiation primary response protein MyD88 (296 aa).

The 56-residue stretch at 54–109 (MGFEYLEIRELETRPDPTRSLLDAWQGRSGASVGRLLELLALLDREDILKELKSRI) folds into the Death domain. Positions 110-155 (EEDCQKYLGKQQNQESEKPLQVARVESSVPQTKELGGITTLDDPLG) are intermediate domain. A TIR domain is found at 159–293 (ELFDAFICYC…WFWTRLAKAL (135 aa)). The residue at position 244 (Ser244) is a Phosphoserine.

As to quaternary structure, homodimer. Also forms heterodimers with TIRAP. Binds to TLR2, TLR4, IRAK1, IRAK2 and IRAK4 via their respective TIR domains. Interacts with IL18R1. Interacts with BMX, IL1RL1, IKBKE and IRF7. Interacts with LRRFIP1 and LRRFIP2; this interaction positively regulates Toll-like receptor (TLR) signaling in response to agonist. Interacts with FLII. LRRFIP1 and LRRFIP2 compete with FLII for MYD88-binding. Interacts with IRF1. Upon IL1B treatment, forms a complex with PELI1, IRAK1, IRAK4 and TRAF6; this complex recruits MAP3K7/TAK1, TAB1 and TAB2 to mediate NF-kappa-B activation. Direct binding of SMAD6 to PELI1 prevents the complex formation and hence negatively regulates IL1R-TLR signaling and eventually NF-kappa-B-mediated gene expression. May interact with PIK3AP1. Interacts (via TIR domain) with DHX9 (via H2A and OB-fold regions); this interaction is direct. Interacts with OTUD4 deubiquitinase; the interaction is direct. Post-translationally, ubiquitinated; undergoes 'Lys-63'-linked polyubiquitination. OTUD4 specifically hydrolyzes 'Lys-63'-linked polyubiquitinated MYD88. Deubiquitinated by USP3 that cleaves 'Lys-63'-linked ubiquitin chains leading to inhibition of MYD88-induced NF-kappa-B signaling. Detected in bone marrow. Isoform 1 is expressed in testis, kidney, lung, ovary, adrenal gland, provstate, thymus and heart, and weakly in skeletal muscle, liver, spleen and brain. Isoform 2 is mainly expressed in the spleen and weakly in brain.

The protein localises to the cytoplasm. The protein resides in the nucleus. Functionally, adapter protein involved in the Toll-like receptor and IL-1 receptor signaling pathway in the innate immune response. Acts via IRAK1, IRAK2, IRF7 and TRAF6, leading to NF-kappa-B activation, cytokine secretion and the inflammatory response. Increases IL-8 transcription. Involved in IL-18-mediated signaling pathway. Activates IRF1 resulting in its rapid migration into the nucleus to mediate an efficient induction of IFN-beta, NOS2/INOS, and IL12A genes. Upon TLR8 activation by GU-rich single-stranded RNA (GU-rich RNA) derived from viruses, induces IL1B release through NLRP3 inflammasome activation. MyD88-mediated signaling in intestinal epithelial cells is crucial for maintenance of gut homeostasis and controls the expression of the antimicrobial lectin REG3G in the small intestine. Mediates leukocyte recruitment at the inflammatory site. Its function is as follows. Defective in its ability to induce IRAK phosphorylation and NF-kappa-B activation and can function as a negative regulator of activation by IL-1 or lipopolysaccharide (LPS). The chain is Myeloid differentiation primary response protein MyD88 from Mus musculus (Mouse).